Here is a 1190-residue protein sequence, read N- to C-terminus: Pyruvate-flavodoxin oxidoreductase (1190 aa).

2 4Fe-4S ferredoxin-type domains span residues 687-716 (EIPVWDTDVCIQCGKCVMVCPHSVIRSKVY) and 743-773 (FTIQVAAEDCTGCGICVDVCPAKNKAQPRKK). [4Fe-4S] cluster-binding residues include cysteine 696, cysteine 699, cysteine 702, cysteine 706, cysteine 752, cysteine 755, cysteine 758, cysteine 762, cysteine 826, cysteine 829, cysteine 854, and cysteine 1089.

It belongs to the pyruvate:ferredoxin/flavodoxin oxidoreductase family. It depends on [4Fe-4S] cluster as a cofactor.

The enzyme catalyses oxidized [flavodoxin] + pyruvate + CoA + 2 H(+) = reduced [flavodoxin] + acetyl-CoA + CO2. Oxidoreductase required for the transfer of electrons from pyruvate to flavodoxin, which reduces nitrogenase. The polypeptide is Pyruvate-flavodoxin oxidoreductase (nifJ) (Trichormus variabilis (strain ATCC 29413 / PCC 7937) (Anabaena variabilis)).